A 614-amino-acid chain; its full sequence is UvrABC system protein C (614 aa).

The 78-residue stretch at 14-91 folds into the GIY-YIG domain; the sequence is TSPGCYIHKD…IKENKPKYNI (78 aa). The UVR domain occupies 196-231; it reads NKIIDELKGKMAAAAQTMEFERAAEYRDLIQAIGTL. The segment at 595 to 614 is disordered; it reads LPQVAEERVDYQTEGNHNKP.

The protein belongs to the UvrC family. In terms of assembly, interacts with UvrB in an incision complex.

Its subcellular location is the cytoplasm. In terms of biological role, the UvrABC repair system catalyzes the recognition and processing of DNA lesions. UvrC both incises the 5' and 3' sides of the lesion. The N-terminal half is responsible for the 3' incision and the C-terminal half is responsible for the 5' incision. In Streptococcus pneumoniae (strain Taiwan19F-14), this protein is UvrABC system protein C.